The chain runs to 1132 residues: Eisosome protein SEG2 (1132 aa).

The segment covering 76 to 95 (KRTSSLPNQGHKNTSNNSAG) has biased composition (polar residues). 2 disordered regions span residues 76 to 142 (KRTS…GNSG) and 171 to 225 (RYSL…NDYH). The segment covering 101 to 113 (AHEDAETTFREFG) has biased composition (basic and acidic residues). Residues 115 to 142 (KQSSKVLNISSSTGQNSKSRTTSLGNSG) are compositionally biased toward polar residues. The residue at position 137 (Ser-137) is a Phosphoserine. A compositionally biased stretch (basic and acidic residues) spans 208-225 (GSQEKKSESGGKSKNDYH). Ser-280 carries the post-translational modification Phosphoserine. The interval 404–429 (PTLSEPKPAYVPPEDVEKEPSTLSNQ) is disordered. Residues Ser-504 and Ser-507 each carry the phosphoserine modification. 2 disordered regions span residues 510 to 938 (GGNQ…FRSM) and 961 to 993 (EKKE…THTT). Lys-526 is covalently cross-linked (Glycyl lysine isopeptide (Lys-Gly) (interchain with G-Cter in ubiquitin)). Acidic residues-rich tracts occupy residues 550-561 (DQEEALSDNEPE) and 595-644 (KDDD…DDEY). Ser-556 is modified (phosphoserine). 2 stretches are compositionally biased toward polar residues: residues 688–699 (SENAEVSQSGTN) and 710–735 (YLTN…TDTT). Residue Lys-743 forms a Glycyl lysine isopeptide (Lys-Gly) (interchain with G-Cter in ubiquitin) linkage. Positions 761-773 (SSTSSSIYSIETS) are enriched in low complexity. 2 stretches are compositionally biased toward polar residues: residues 774–810 (PNID…SSHQ) and 827–845 (NRSC…TLSH). Residues 850–860 (PASDSSSSPPY) show a composition bias toward low complexity. Positions 916–930 (PPARKSSFEKERPAK) are enriched in basic and acidic residues. Phosphoserine occurs at positions 980 and 1022.

Belongs to the SEG1 family. Component of eisosomes, large cytoplasmic protein assemblies that localize to specialized domains termed MCCs on the plasma membrane.

Its subcellular location is the cell membrane. Functionally, likely plays only a minor role in eisosome assembly. The protein is Eisosome protein SEG2 (SEG2) of Saccharomyces cerevisiae (strain ATCC 204508 / S288c) (Baker's yeast).